The primary structure comprises 593 residues: ATP-dependent RNA helicase MRH4, mitochondrial (593 aa).

Residues M1–A106 constitute a mitochondrion transit peptide. Low complexity predominate over residues G42–G51. Residues G42 to K63 are disordered. Residues T52 to K63 show a composition bias toward polar residues. Residues V130–Q137 carry the Q motif motif. One can recognise a Helicase ATP-binding domain in the interval I181–I399. A194–T201 contributes to the ATP binding site. Positions D347–D350 match the DEAD box motif. One can recognise a Helicase C-terminal domain in the interval A433 to G593.

It belongs to the DEAD box helicase family. MRH4 subfamily.

It is found in the mitochondrion. The enzyme catalyses ATP + H2O = ADP + phosphate + H(+). In terms of biological role, ATP-binding RNA helicase involved in mitochondrial RNA metabolism. Required for maintenance of mitochondrial DNA. The polypeptide is ATP-dependent RNA helicase MRH4, mitochondrial (MRH4) (Scheffersomyces stipitis (strain ATCC 58785 / CBS 6054 / NBRC 10063 / NRRL Y-11545) (Yeast)).